The primary structure comprises 448 residues: Protein chibby homolog 2 (448 aa).

Residues Ser41, Ser86, Ser89, Ser97, Ser124, Ser144, Ser148, and Ser150 each carry the phosphoserine modification. Residues 164 to 198 (KECMLQEENKSLREENKALREENRMLSKENKILQV) adopt a coiled-coil conformation. A phosphoserine mark is found at Ser212 and Ser225. Residues 242–267 (KEDSTLQLLREENRALQQLLEQKQAY) adopt a coiled-coil conformation. The segment at 270 to 323 (QAEDTAAPAEESKPAPSPHEEPCSPGLLQDQGSGLSSRFEEPKGPPARQEDSKE) is disordered. Composition is skewed to basic and acidic residues over residues 279 to 291 (EESK…HEEP) and 307 to 323 (RFEE…DSKE). 2 positions are modified to phosphoserine: Ser335 and Ser338. The stretch at 356–414 (LQLLREMRQALQALLKENRLLQEENRTLQVLRAEHRGFQEENKALWENNKLKLQQKLVI) forms a coiled coil.

The protein belongs to the chibby family. SPERT subfamily. In terms of assembly, homodimer. Binds to NEK1. Testis-specific.

In Homo sapiens (Human), this protein is Protein chibby homolog 2.